A 336-amino-acid chain; its full sequence is Phenylalanine--tRNA ligase alpha subunit (336 aa).

E263 is a binding site for Mg(2+).

It belongs to the class-II aminoacyl-tRNA synthetase family. Phe-tRNA synthetase alpha subunit type 1 subfamily. In terms of assembly, tetramer of two alpha and two beta subunits. It depends on Mg(2+) as a cofactor.

It is found in the cytoplasm. It carries out the reaction tRNA(Phe) + L-phenylalanine + ATP = L-phenylalanyl-tRNA(Phe) + AMP + diphosphate + H(+). This is Phenylalanine--tRNA ligase alpha subunit from Thermosynechococcus vestitus (strain NIES-2133 / IAM M-273 / BP-1).